A 135-amino-acid chain; its full sequence is Flagellar assembly factor FliW 1 (135 aa).

It belongs to the FliW family. In terms of assembly, interacts with translational regulator CsrA and flagellin(s).

The protein resides in the cytoplasm. Acts as an anti-CsrA protein, binds CsrA and prevents it from repressing translation of its target genes, one of which is flagellin. Binds to flagellin and participates in the assembly of the flagellum. In Helicobacter pylori (strain ATCC 700392 / 26695) (Campylobacter pylori), this protein is Flagellar assembly factor FliW 1.